Consider the following 379-residue polypeptide: Tryptophan 2,3-dioxygenase (379 aa).

Substrate contacts are provided by residues 57–61 (FIITH) and arginine 128. A heme-binding site is contributed by histidine 312. Threonine 327 lines the substrate pocket.

This sequence belongs to the tryptophan 2,3-dioxygenase family. In terms of assembly, homotetramer. Dimer of dimers. The cofactor is heme.

The catalysed reaction is L-tryptophan + O2 = N-formyl-L-kynurenine. It participates in amino-acid degradation; L-tryptophan degradation via kynurenine pathway; L-kynurenine from L-tryptophan: step 1/2. The protein operates within pigment biosynthesis; ommochrome biosynthesis. Heme-dependent dioxygenase that catalyzes the oxidative cleavage of the L-tryptophan (L-Trp) pyrrole ring and converts L-tryptophan to N-formyl-L-kynurenine. Catalyzes the oxidative cleavage of the indole moiety. Required during larval growth to control the level of potentially harmful free tryptophan in the hemolymph. In the adult the same reaction is the first step in the ommochrome biosynthetic pathway. This Drosophila melanogaster (Fruit fly) protein is Tryptophan 2,3-dioxygenase.